A 341-amino-acid polypeptide reads, in one-letter code: Tryptophan--tRNA ligase (341 aa).

ATP is bound by residues 11–13 and 19–20; these read RPT and GH. The short motif at 12 to 20 is the 'HIGH' region element; that stretch reads PTGKLHIGH. Asp-140 lines the L-tryptophan pocket. Residues 152 to 154, Leu-194, and 202 to 206 each bind ATP; these read GTD and KMSKS. Residues 202 to 206 carry the 'KMSKS' region motif; it reads KMSKS.

The protein belongs to the class-I aminoacyl-tRNA synthetase family. As to quaternary structure, homodimer.

It is found in the cytoplasm. It catalyses the reaction tRNA(Trp) + L-tryptophan + ATP = L-tryptophyl-tRNA(Trp) + AMP + diphosphate + H(+). In terms of biological role, catalyzes the attachment of tryptophan to tRNA(Trp). This is Tryptophan--tRNA ligase from Streptococcus pneumoniae serotype 4 (strain ATCC BAA-334 / TIGR4).